A 308-amino-acid polypeptide reads, in one-letter code: E3 ubiquitin-protein ligase SINAT2 (308 aa).

The segment at 60 to 96 (CPVCTNLMYPPIHQCPNGHTLCSNCKLRVQNTCPTCR) adopts an RING-type zinc-finger fold. An SBD region spans residues 110–303 (VAESLEVPCR…QELKLRVTGR (194 aa)). The SIAH-type zinc-finger motif lies at 113 to 173 (SLEVPCRYQN…LVVHLKDDHK (61 aa)). 8 residues coordinate Zn(2+): Cys118, Cys125, His137, Cys141, Cys148, Cys155, His167, and His172.

Belongs to the SINA (Seven in absentia) family. As to quaternary structure, interacts with RAP2-2. Interacts with SINAT6. Interacts with ATG6 and TRAF1A. Interacts with WAV3. Interacts with FREE1. Interacts with ELC/VPS23A.

The protein localises to the endosome. It localises to the multivesicular body. Its subcellular location is the cytoplasmic vesicle. The protein resides in the autophagosome. The enzyme catalyses S-ubiquitinyl-[E2 ubiquitin-conjugating enzyme]-L-cysteine + [acceptor protein]-L-lysine = [E2 ubiquitin-conjugating enzyme]-L-cysteine + N(6)-ubiquitinyl-[acceptor protein]-L-lysine.. It functions in the pathway protein modification; protein ubiquitination. E3 ubiquitin-protein ligase that mediates ubiquitination and subsequent proteasomal degradation of target proteins. E3 ubiquitin ligases accept ubiquitin from an E2 ubiquitin-conjugating enzyme in the form of a thioester and then directly transfers the ubiquitin to targeted substrates. It probably triggers the ubiquitin-mediated degradation of different substrates. Mediates the proteasomal-dependent degradation of ATG6, a component of the autophagosome complex. Requires TRAF1A/MUSE14 and TRAF1B/MUSE13 to target ATG6 for ubiquitination and subsequent regulation of autophagosome assembly. Modulates directly the ubiquitination and proteasomal-dependent degradation of FREE1, a component of the ESCRT-I complex. Modulates directly the ubiquitination and proteasomal-dependent degradation of ELC/VPS23A, a component of the ESCRT-I complex. In Arabidopsis thaliana (Mouse-ear cress), this protein is E3 ubiquitin-protein ligase SINAT2.